We begin with the raw amino-acid sequence, 872 residues long: Alanine--tRNA ligase (872 aa).

Residues H567, H571, C669, and H673 each contribute to the Zn(2+) site.

It belongs to the class-II aminoacyl-tRNA synthetase family. It depends on Zn(2+) as a cofactor.

It localises to the cytoplasm. The enzyme catalyses tRNA(Ala) + L-alanine + ATP = L-alanyl-tRNA(Ala) + AMP + diphosphate. In terms of biological role, catalyzes the attachment of alanine to tRNA(Ala) in a two-step reaction: alanine is first activated by ATP to form Ala-AMP and then transferred to the acceptor end of tRNA(Ala). Also edits incorrectly charged Ser-tRNA(Ala) and Gly-tRNA(Ala) via its editing domain. This is Alanine--tRNA ligase from Streptococcus pyogenes serotype M4 (strain MGAS10750).